The chain runs to 160 residues: ATP synthase subunit b (160 aa).

Residues 5-27 (IEQILTQIIAFLIMLGVLKKFVW) form a helical membrane-spanning segment.

The protein belongs to the ATPase B chain family. In terms of assembly, F-type ATPases have 2 components, F(1) - the catalytic core - and F(0) - the membrane proton channel. F(1) has five subunits: alpha(3), beta(3), gamma(1), delta(1), epsilon(1). F(0) has three main subunits: a(1), b(2) and c(10-14). The alpha and beta chains form an alternating ring which encloses part of the gamma chain. F(1) is attached to F(0) by a central stalk formed by the gamma and epsilon chains, while a peripheral stalk is formed by the delta and b chains.

The protein resides in the cell inner membrane. Its function is as follows. F(1)F(0) ATP synthase produces ATP from ADP in the presence of a proton or sodium gradient. F-type ATPases consist of two structural domains, F(1) containing the extramembraneous catalytic core and F(0) containing the membrane proton channel, linked together by a central stalk and a peripheral stalk. During catalysis, ATP synthesis in the catalytic domain of F(1) is coupled via a rotary mechanism of the central stalk subunits to proton translocation. In terms of biological role, component of the F(0) channel, it forms part of the peripheral stalk, linking F(1) to F(0). In Protochlamydia amoebophila (strain UWE25), this protein is ATP synthase subunit b.